Reading from the N-terminus, the 237-residue chain is Demethylmenaquinone methyltransferase (237 aa).

Residues threonine 62, aspartate 80, 102–103 (DA), and serine 119 contribute to the S-adenosyl-L-methionine site.

This sequence belongs to the class I-like SAM-binding methyltransferase superfamily. MenG/UbiE family.

The catalysed reaction is a 2-demethylmenaquinol + S-adenosyl-L-methionine = a menaquinol + S-adenosyl-L-homocysteine + H(+). The protein operates within quinol/quinone metabolism; menaquinone biosynthesis; menaquinol from 1,4-dihydroxy-2-naphthoate: step 2/2. Functionally, methyltransferase required for the conversion of demethylmenaquinol (DMKH2) to menaquinol (MKH2). The chain is Demethylmenaquinone methyltransferase from Renibacterium salmoninarum (strain ATCC 33209 / DSM 20767 / JCM 11484 / NBRC 15589 / NCIMB 2235).